The primary structure comprises 177 residues: Ribosome maturation factor RimM (177 aa).

Residues 104–176 form the PRC barrel domain; it reads DGEYYFFEIL…KIIVNMPEWL (73 aa).

The protein belongs to the RimM family. In terms of assembly, binds ribosomal protein uS19.

The protein resides in the cytoplasm. Functionally, an accessory protein needed during the final step in the assembly of 30S ribosomal subunit, possibly for assembly of the head region. Essential for efficient processing of 16S rRNA. May be needed both before and after RbfA during the maturation of 16S rRNA. It has affinity for free ribosomal 30S subunits but not for 70S ribosomes. The polypeptide is Ribosome maturation factor RimM (Fervidobacterium nodosum (strain ATCC 35602 / DSM 5306 / Rt17-B1)).